Consider the following 216-residue polypeptide: Small ribosomal subunit protein uS5 (216 aa).

Residues 51–114 (LEEEVIDVNL…DDAKFNIIKV (64 aa)) form the S5 DRBM domain.

It belongs to the universal ribosomal protein uS5 family. As to quaternary structure, part of the 30S ribosomal subunit. Contacts protein S4.

With S4 and S12 plays an important role in translational accuracy. This chain is Small ribosomal subunit protein uS5, found in Methanothermobacter thermautotrophicus (strain ATCC 29096 / DSM 1053 / JCM 10044 / NBRC 100330 / Delta H) (Methanobacterium thermoautotrophicum).